A 250-amino-acid polypeptide reads, in one-letter code: Membrane-spanning 4-domains subfamily A member 8 (250 aa).

Over 1–74 (MNSMTSAVPV…ALKEGKTLGA (74 aa)) the chain is Cytoplasmic. The chain crosses the membrane as a helical span at residues 75 to 95 (IQIIIGLAHIGLGSIMATVLV). The Extracellular segment spans residues 96-98 (GEY). Residues 99–119 (LSISFYGGFPFWGGLWFIISG) traverse the membrane as a helical segment. Residues 120 to 136 (SLSVAAENQPYSYCLLS) are Cytoplasmic-facing. The helical transmembrane segment at 137 to 157 (GSLGLNIVSAICSAVGVILFI) threads the bilayer. The Extracellular segment spans residues 158 to 180 (TDLSIPHPYAYPDYYPYAWGVNP). Residues 181 to 201 (GMAISGVLLVFCLLEFGIACA) traverse the membrane as a helical segment. Residues 202–250 (SSHFGCQLVCCQSSNVSVIYPNIYAANPVITPEPVTSPPSYSSEIQANK) lie on the Cytoplasmic side of the membrane.

The protein belongs to the MS4A family. As to expression, expressed by hematopoietic tissues and cells lines.

The protein localises to the membrane. Its function is as follows. May be involved in signal transduction as a component of a multimeric receptor complex. This is Membrane-spanning 4-domains subfamily A member 8 (MS4A8) from Homo sapiens (Human).